The following is a 192-amino-acid chain: Fe/S biogenesis protein NfuA (192 aa).

2 residues coordinate [4Fe-4S] cluster: C149 and C152.

Belongs to the NfuA family. In terms of assembly, homodimer. [4Fe-4S] cluster is required as a cofactor.

Involved in iron-sulfur cluster biogenesis. Binds a 4Fe-4S cluster, can transfer this cluster to apoproteins, and thereby intervenes in the maturation of Fe/S proteins. Could also act as a scaffold/chaperone for damaged Fe/S proteins. This is Fe/S biogenesis protein NfuA from Shewanella pealeana (strain ATCC 700345 / ANG-SQ1).